Reading from the N-terminus, the 496-residue chain is Acyltransferase M4 (496 aa).

His163 (proton acceptor) is an active-site residue.

This sequence belongs to the plant acyltransferase family. In terms of assembly, monomer.

It participates in secondary metabolite biosynthesis. Functionally, acyltransferase; part of the gene cluster that mediates the biosynthesis of squalestatin S1 (SQS1, also known as zaragozic acid A), a heavily oxidized fungal polyketide that offers potent cholesterol lowering activity by targeting squalene synthase (SS). SQS1 is composed of a 2,8-dioxobicyclic[3.2.1]octane-3,4,5-tricarboxyclic acid core that is connected to two lipophilic polyketide arms. These initial steps feature the priming of an unusual benzoic acid starter unit onto the highly reducing polyketide synthase pks2, followed by oxaloacetate extension and product release to generate a tricarboxylic acid containing product. The phenylalanine ammonia lyase (PAL) M7 and the acyl-CoA ligase M9 are involved in transforming phenylalanine into benzoyl-CoA. The citrate synthase-like protein R3 is involved in connecting the C-alpha-carbons of the hexaketide chain and oxaloacetate to afford the tricarboxylic acid unit. The potential hydrolytic enzymes, M8 and M10, are in close proximity to pks2 and may participate in product release. On the other side, the tetraketide arm is synthesized by a the squalestatin tetraketide synthase pks1 and enzymatically esterified to the core in the last biosynthetic step, by the acetyltransferase M4. The biosynthesis of the tetraketide must involve 3 rounds of chain extension. After the first and second rounds methyl-transfer occurs, and in all rounds of extension the ketoreductase and dehydratase are active. The enoyl reductase and C-MeT of pks1 are not active in the final round of extension. The acetyltransferase M4 appears to have a broad substrate selectivity for its acyl CoA substrate, allowing the in vitro synthesis of novel squalestatins. The biosynthesis of SQS1 requires several oxidative steps likely performed by oxidoreductases M1, R1 and R2. Finally, in support of the identification of the cluster as being responsible for SQS1 production, the cluster contains a gene encoding a putative squalene synthase (SS) R6, suggesting a likely mechanism for self-resistance. The polypeptide is Acyltransferase M4 (Phoma sp. (strain ATCC 20986 / MF5453)).